Here is a 677-residue protein sequence, read N- to C-terminus: Sulfate transporter 2.2 (677 aa).

Over 1-110 (MQLSSLSHTS…QYKLNLFKKD (110 aa)) the chain is Cytoplasmic. The chain crosses the membrane as a helical span at residues 111–131 (LMAGLTLASLCIPQSIGYANL). At 132 to 133 (AG) the chain is on the extracellular side. The helical transmembrane segment at 134 to 154 (LDPEYGLYTSVVPPLIYSTMG) threads the bilayer. The Cytoplasmic segment spans residues 155–158 (TSRE). The chain crosses the membrane as a helical span at residues 159–179 (LAIGPVAVVSLLLSSMVRDLQ). The Extracellular portion of the chain corresponds to 180–190 (DPVTDPIAYRK). A helical membrane pass occupies residues 191–211 (IVFTVTFFAGAFQAIFGLFRL). At 212 to 213 (GF) the chain is on the cytoplasmic side. The helical transmembrane segment at 214-234 (LVDFLSHAALVGFMAGAAIVI) threads the bilayer. The Extracellular segment spans residues 235 to 270 (GLQQLKGLFGLTHFTNKTDVVSVLSSVFHSLHHPWQ). A glycan (N-linked (GlcNAc...) asparagine) is linked at asparagine 250. Residues 271–291 (PLNFVIGSSFLIFILLARFIG) traverse the membrane as a helical segment. The Cytoplasmic portion of the chain corresponds to 292 to 296 (KRNNK). A helical transmembrane segment spans residues 297–317 (LFWIPAMAPLISVVLATLIVY). Residues 318–352 (LSNAESRGVKIVKHIKPGFNQLSVNQLQFKSPHLG) are Extracellular-facing. A helical membrane pass occupies residues 353–373 (QIAKIGLISAIIALTEAIAVG). Topologically, residues 374–389 (RSFATIKGYRLDGNKE) are cytoplasmic. Residues 390–410 (MMAMGFMNIAGSLSSCYVATG) traverse the membrane as a helical segment. The Extracellular segment spans residues 411 to 422 (SFSRTAVNFSAG). Asparagine 418 is a glycosylation site (N-linked (GlcNAc...) asparagine). A helical transmembrane segment spans residues 423–443 (CETVVSNIVMAITVMISLEVL). Over 444 to 446 (TRF) the chain is Cytoplasmic. A helical transmembrane segment spans residues 447–467 (LYFTPTAILASIILSALPGLI). Over 468 to 482 (DVSGALHIWKLDKLD) the chain is Extracellular. A helical transmembrane segment spans residues 483–503 (FLVLIAAFFGVLFASVEIGLL). The Cytoplasmic segment spans residues 504-677 (LAVGISFARI…RARSTSHELC (174 aa)). The 127-residue stretch at 540–666 (YPMANKTAGL…MTVGEAVDIY (127 aa)) folds into the STAS domain.

It belongs to the SLC26A/SulP transporter (TC 2.A.53) family. In terms of tissue distribution, expressed in the phloem in roots and in the phloem of vascular bundles in leaves.

The protein localises to the membrane. Its function is as follows. Low-affinity H(+)/sulfate cotransporter that may be involved in the distribution of sulfate from vascular bundles to the palisade cells of the leaves. Plays a central role in the regulation of sulfate assimilation. This is Sulfate transporter 2.2 (SULTR2;2) from Arabidopsis thaliana (Mouse-ear cress).